A 173-amino-acid chain; its full sequence is 6,7-dimethyl-8-ribityllumazine synthase (173 aa).

Residues F24, 58 to 60 (ALE), and 82 to 84 (AVI) each bind 5-amino-6-(D-ribitylamino)uracil. 87–88 (ET) is a binding site for (2S)-2-hydroxy-3-oxobutyl phosphate. The active-site Proton donor is the H90. Position 115 (N115) interacts with 5-amino-6-(D-ribitylamino)uracil. Position 129 (R129) interacts with (2S)-2-hydroxy-3-oxobutyl phosphate. The segment at 150 to 173 (ALEPEEDDEDDEDEDFDDEEDDGR) is disordered. Over residues 152 to 173 (EPEEDDEDDEDEDFDDEEDDGR) the composition is skewed to acidic residues.

Belongs to the DMRL synthase family.

It catalyses the reaction (2S)-2-hydroxy-3-oxobutyl phosphate + 5-amino-6-(D-ribitylamino)uracil = 6,7-dimethyl-8-(1-D-ribityl)lumazine + phosphate + 2 H2O + H(+). It participates in cofactor biosynthesis; riboflavin biosynthesis; riboflavin from 2-hydroxy-3-oxobutyl phosphate and 5-amino-6-(D-ribitylamino)uracil: step 1/2. In terms of biological role, catalyzes the formation of 6,7-dimethyl-8-ribityllumazine by condensation of 5-amino-6-(D-ribitylamino)uracil with 3,4-dihydroxy-2-butanone 4-phosphate. This is the penultimate step in the biosynthesis of riboflavin. The chain is 6,7-dimethyl-8-ribityllumazine synthase from Bordetella pertussis (strain Tohama I / ATCC BAA-589 / NCTC 13251).